A 264-amino-acid chain; its full sequence is Acyl-[acyl-carrier-protein]--UDP-N-acetylglucosamine O-acyltransferase (264 aa).

The protein belongs to the transferase hexapeptide repeat family. LpxA subfamily. As to quaternary structure, homotrimer.

It is found in the cytoplasm. It catalyses the reaction a (3R)-hydroxyacyl-[ACP] + UDP-N-acetyl-alpha-D-glucosamine = a UDP-3-O-[(3R)-3-hydroxyacyl]-N-acetyl-alpha-D-glucosamine + holo-[ACP]. The protein operates within glycolipid biosynthesis; lipid IV(A) biosynthesis; lipid IV(A) from (3R)-3-hydroxytetradecanoyl-[acyl-carrier-protein] and UDP-N-acetyl-alpha-D-glucosamine: step 1/6. In terms of biological role, involved in the biosynthesis of lipid A, a phosphorylated glycolipid that anchors the lipopolysaccharide to the outer membrane of the cell. This is Acyl-[acyl-carrier-protein]--UDP-N-acetylglucosamine O-acyltransferase from Rickettsia typhi (strain ATCC VR-144 / Wilmington).